Consider the following 131-residue polypeptide: Thrombocorticin (131 aa).

Cysteines 3 and 111 form a disulfide. Residues 28-60 are disordered; it reads RNESVEVKDSNGNTVSRGSGSSSSGGTFTVINM. Residues 37–54 show a composition bias toward low complexity; the sequence is SNGNTVSRGSGSSSSGGT. The Pseudodomain-swapping motif motif lies at 117-131; the sequence is DFNDVFVLITGLVRG.

In terms of biological role, binds to fucose and mannose in a calcium-dependent manner (in vitro). Acts as an agonist for human thrombopoietin receptor MPL (in vitro). Binding of sugar-moieties may promote the interaction with human MPL on the cell surface (in vitro). Catalyzes MPL dimerization and activation, and modulates internalization of the receptor (in vitro). Exhibits proliferation activity in murine recombinant Ba/F3 cells expressing human MPL (Ba/F3-huMPL) (in vitro). Induces phosphorylation of STAT5 in recombinant Ba/F3-huMPL cells, possibly by stimulating MPL on the cell surface to transduce signals via Jak/STAT signaling pathway (in vitro). Does not aggregate rabbit erythrocytes, indicating absent lectin-like agglutination activity (in vitro). The protein is Thrombocorticin of Corticium sp. (Marine sponge).